The following is a 705-amino-acid chain: Putative membrane protein SCO6666 (705 aa).

The next 13 helical transmembrane spans lie at 16 to 36 (VMLLWGLFLLLGFGLGTGVFG), 144 to 164 (LHGIDGSAVSGVHVSGGPLLG), 177 to 197 (NAELISLPVVLVLLLVVFGGL), 201 to 221 (GLPLLVAVAGIAGAFLALFGF), 232 to 252 (IQVTTMLGLGLAVDYALLMLV), 280 to 300 (LFSGLTVAVSLAGLLVFPSTF), 306 to 326 (LAVAAVVVVDMLAALTLLPAL), 360 to 380 (VAVLAVAVPALLVVALPVTGM), 504 to 524 (ALTVLTGIFVLLFAFTGSVLL), 528 to 548 (TVATTLLSLGAALGAVVWVFQ), 561 to 581 (LGALSLTAPPLIIAIAFGLAM), 615 to 635 (VVTCAALLLAVVFGAFMTGGF), and 636 to 656 (SPILQIGLGLTLAVLIDATVV).

This sequence belongs to the resistance-nodulation-cell division (RND) (TC 2.A.6) family. MmpL subfamily.

Its subcellular location is the cell membrane. This chain is Putative membrane protein SCO6666, found in Streptomyces coelicolor (strain ATCC BAA-471 / A3(2) / M145).